The chain runs to 602 residues: Elongation factor 4 (602 aa).

A tr-type G domain is found at Ser7–Lys189. Residues Asp19 to Thr24 and Asn136 to Asp139 each bind GTP.

It belongs to the TRAFAC class translation factor GTPase superfamily. Classic translation factor GTPase family. LepA subfamily.

The protein resides in the cell inner membrane. It carries out the reaction GTP + H2O = GDP + phosphate + H(+). Its function is as follows. Required for accurate and efficient protein synthesis under certain stress conditions. May act as a fidelity factor of the translation reaction, by catalyzing a one-codon backward translocation of tRNAs on improperly translocated ribosomes. Back-translocation proceeds from a post-translocation (POST) complex to a pre-translocation (PRE) complex, thus giving elongation factor G a second chance to translocate the tRNAs correctly. Binds to ribosomes in a GTP-dependent manner. This is Elongation factor 4 from Prochlorococcus marinus (strain MIT 9211).